The chain runs to 558 residues: Scarecrow-like protein 6 (558 aa).

Residues 19-90 (FSSSFPQPPS…GGDATTDEQC (72 aa)) are disordered. A compositionally biased stretch (low complexity) spans 54–75 (SVLDSLISPTSSSTVSSSHGGN). The GRAS domain maps to 196–554 (KRLNPGPVGI…TELVGVSAWR (359 aa)). A leucine repeat I (LRI) region spans residues 203-257 (VGITEQLVKAAEVIESDTCLAQGILARLNQQLSSPVGKPLERAAFYFKEALNNLL). The interval 276–340 (YKSFSEISPV…DNAAPLSLKI (65 aa)) is VHIID. The VHIID motif lies at 307 to 311 (LHIID). Residues 356–388 (FTQDNLKHFASEINISLDIQVLSLDLLGSISWP) form a leucine repeat II (LRII) region. A PFYRE region spans residues 396 to 479 (VAVNISAASF…RFLIQPEIEK (84 aa)). The interval 482 to 554 (LDRSRPIERP…TELVGVSAWR (73 aa)) is SAW.

It belongs to the GRAS family. Interacts with Meloidogyne incognita 16D10. Expressed in seedlings, roots, leaves, flowers and siliques.

Its subcellular location is the nucleus. Its function is as follows. Probable transcription factor involved in plant development. The protein is Scarecrow-like protein 6 (SCL6) of Arabidopsis thaliana (Mouse-ear cress).